The following is a 246-amino-acid chain: Acetoacetate decarboxylase (246 aa).

Lysine 116 functions as the Schiff-base intermediate with acetoacetate in the catalytic mechanism.

Belongs to the ADC family. In terms of assembly, homododecamer.

The enzyme catalyses acetoacetate + H(+) = acetone + CO2. Functionally, catalyzes the conversion of acetoacetate to acetone and carbon dioxide. This is Acetoacetate decarboxylase from Chromobacterium violaceum (strain ATCC 12472 / DSM 30191 / JCM 1249 / CCUG 213 / NBRC 12614 / NCIMB 9131 / NCTC 9757 / MK).